A 98-amino-acid polypeptide reads, in one-letter code: Hainantoxin-XVII-2 (98 aa).

The N-terminal stretch at 1 to 40 is a signal peptide; that stretch reads MTTVGVSLFRRSPEKITMKIATFLGLSFLLIASYVLICEA. A propeptide spanning residues 41 to 64 is cleaved from the precursor; the sequence is QHPGFQELLILEENMRDPENSKER. 2 cysteine pairs are disulfide-bonded: Cys66-Cys81 and Cys73-Cys85.

Belongs to the hainantoxin family. 17 subfamily. As to expression, expressed by the venom gland.

It is found in the secreted. Its function is as follows. Putative ion channel inhibitor. This is Hainantoxin-XVII-2 from Cyriopagopus hainanus (Chinese bird spider).